A 369-amino-acid polypeptide reads, in one-letter code: 4-hydroxy-3-methylbut-2-en-1-yl diphosphate synthase (flavodoxin) (369 aa).

Residues Cys270, Cys273, Cys305, and Glu312 each contribute to the [4Fe-4S] cluster site.

This sequence belongs to the IspG family. The cofactor is [4Fe-4S] cluster.

The catalysed reaction is (2E)-4-hydroxy-3-methylbut-2-enyl diphosphate + oxidized [flavodoxin] + H2O + 2 H(+) = 2-C-methyl-D-erythritol 2,4-cyclic diphosphate + reduced [flavodoxin]. Its pathway is isoprenoid biosynthesis; isopentenyl diphosphate biosynthesis via DXP pathway; isopentenyl diphosphate from 1-deoxy-D-xylulose 5-phosphate: step 5/6. Functionally, converts 2C-methyl-D-erythritol 2,4-cyclodiphosphate (ME-2,4cPP) into 1-hydroxy-2-methyl-2-(E)-butenyl 4-diphosphate. This chain is 4-hydroxy-3-methylbut-2-en-1-yl diphosphate synthase (flavodoxin), found in Pseudomonas putida (strain GB-1).